We begin with the raw amino-acid sequence, 158 residues long: Small ribosomal subunit protein uS9 (158 aa).

Belongs to the universal ribosomal protein uS9 family.

This chain is Small ribosomal subunit protein uS9, found in Brucella melitensis biotype 2 (strain ATCC 23457).